The primary structure comprises 583 residues: Trehalase (583 aa).

A signal peptide spans 1 to 23 (MPGRTWELCLLLLLGLGLGSQEA). The N-linked (GlcNAc...) asparagine glycan is linked to Asn-78. Substrate-binding positions include Arg-168, 175 to 176 (WD), Asn-212, and 221 to 223 (RSQ). Residues Asn-239 and Asn-261 are each glycosylated (N-linked (GlcNAc...) asparagine). Substrate is bound by residues 286 to 288 (RPE) and Gly-319. The Proton donor/acceptor role is filled by Asp-321. N-linked (GlcNAc...) asparagine glycosylation occurs at Asn-369. The active-site Proton donor/acceptor is the Glu-514. Residue Glu-529 coordinates substrate. Ser-556 carries GPI-anchor amidated serine lipidation. Positions 557 to 583 (GAKLAFLEPHCLAATLLPSLLLSLLPW) are cleaved as a propeptide — removed in mature form.

The protein belongs to the glycosyl hydrolase 37 family. As to quaternary structure, homodimer; disulfide-linked. In terms of tissue distribution, expressed in kidney, liver and small intestine. Also more weakly expressed in pancreas.

The protein localises to the cell membrane. It catalyses the reaction alpha,alpha-trehalose + H2O = alpha-D-glucose + beta-D-glucose. Intestinal trehalase is probably involved in the hydrolysis of ingested trehalose. The protein is Trehalase of Homo sapiens (Human).